The sequence spans 279 residues: Digeranylgeranylglyceryl phosphate synthase (279 aa).

Helical transmembrane passes span 16–36, 40–60, 77–99, 104–121, 124–144, 146–166, 192–212, 220–240, and 259–279; these read LIAG…LPPI, LLIF…NDYF, GALS…ILIA, FEAF…YLYA, LKPQ…ITPI, GAIA…AFLV, IVWG…ATII, AGIG…LWAA, and LKIA…TKGV.

The protein belongs to the UbiA prenyltransferase family. DGGGP synthase subfamily. Mg(2+) is required as a cofactor.

The protein resides in the cell membrane. It catalyses the reaction sn-3-O-(geranylgeranyl)glycerol 1-phosphate + (2E,6E,10E)-geranylgeranyl diphosphate = 2,3-bis-O-(geranylgeranyl)-sn-glycerol 1-phosphate + diphosphate. It functions in the pathway membrane lipid metabolism; glycerophospholipid metabolism. Functionally, prenyltransferase that catalyzes the transfer of the geranylgeranyl moiety of geranylgeranyl diphosphate (GGPP) to the C2 hydroxyl of (S)-3-O-geranylgeranylglyceryl phosphate (GGGP). This reaction is the second ether-bond-formation step in the biosynthesis of archaeal membrane lipids. The protein is Digeranylgeranylglyceryl phosphate synthase of Thermococcus sibiricus (strain DSM 12597 / MM 739).